The chain runs to 551 residues: Sodium-dependent high-affinity dicarboxylate transporter 2 (551 aa).

10 helical membrane-spanning segments follow: residues 9–29 (LIKKLLVLLGPLVAVPLLFFG), 34–54 (CLFSIIFLSTYWIGEAFPIGV), 82–102 (SIVLFMCTLIMAMAVEATGLH), 119–139 (VMLLGFMCITSFISFFVSDTA), 194–214 (FCKALILACAHASLIGGTAII), 243–263 (WMVFAIPPMFVYLLASYIILV), 347–367 (VSGVLISCILFVWPKDPFDPI), 417–437 (IFVGMSSLPLQLTVTTIIVIM), 449–469 (IFIPISLGVAESMGVHPLYLA), and 497–517 (VISMVEMIVCGFLLNIACILI).

It belongs to the SLC13A/DASS transporter (TC 2.A.47) family. NADC subfamily.

Its subcellular location is the membrane. High-affinity sodium-dicarboxylate cotransporter that accepts a range of tricarboxylic acid-cycle intermediates with 4-5 carbon atoms. There is no interaction with monocarboxylates. The protein is Sodium-dependent high-affinity dicarboxylate transporter 2 (nac-2) of Caenorhabditis elegans.